The chain runs to 590 residues: Polypeptide N-acetylgalactosaminyltransferase 8 (590 aa).

Topologically, residues 1–11 are cytoplasmic; sequence MCLDIWRHKKK. A helical; Signal-anchor for type II membrane protein transmembrane segment spans residues 12–31; that stretch reads VLPLLLLMAIGSIIYYLYTL. The Lumenal segment spans residues 32-590; it reads KLEGERDESA…QHFWDNVKTQ (559 aa). Asparagine 77 carries an N-linked (GlcNAc...) asparagine glycan. Intrachain disulfides connect cysteine 117/cysteine 345, cysteine 336/cysteine 419, cysteine 459/cysteine 475, cysteine 502/cysteine 517, and cysteine 546/cysteine 561. The tract at residues 127–236 is catalytic subdomain A; that stretch reads LPSVSVVITY…KGWLEPLIAP (110 aa). Aspartate 168 contributes to the substrate binding site. A Mn(2+)-binding site is contributed by aspartate 220. Serine 221 serves as a coordination point for substrate. Histidine 222 is a Mn(2+) binding site. N-linked (GlcNAc...) asparagine glycosylation is present at asparagine 241. The segment at 291-353 is catalytic subdomain B; sequence PHKNPIMNGG…PCSRVGHLFR (63 aa). Tryptophan 322 serves as a coordination point for substrate. Histidine 350 contacts Mn(2+). Residue arginine 353 participates in substrate binding. Residues 446 to 573 form the Ricin B-type lectin domain; it reads ASGVLQSISS…KNHKQQWKFG (128 aa).

The protein belongs to the glycosyltransferase 2 family. GalNAc-T subfamily. Mn(2+) serves as cofactor. Expressed in developing oocytes and egg chambers. During embryonic stages 9-11, expressed in the primordium of the foregut, midgut and hindgut. During embryonic stages 12-13, expressed in the posterior midgut and hindgut. During embryonic stages 14-15, expression continues in the hindgut. No expression detected during embryonic stages 16-17 or in third instar larvae imaginal disks.

Its subcellular location is the golgi apparatus membrane. The catalysed reaction is L-seryl-[protein] + UDP-N-acetyl-alpha-D-galactosamine = a 3-O-[N-acetyl-alpha-D-galactosaminyl]-L-seryl-[protein] + UDP + H(+). It catalyses the reaction L-threonyl-[protein] + UDP-N-acetyl-alpha-D-galactosamine = a 3-O-[N-acetyl-alpha-D-galactosaminyl]-L-threonyl-[protein] + UDP + H(+). It functions in the pathway protein modification; protein glycosylation. Catalyzes the initial reaction in O-linked oligosaccharide biosynthesis, the transfer of an N-acetyl-D-galactosamine residue to a serine or threonine residue on the protein receptor. It can both act as a peptide transferase that transfers GalNAc onto unmodified peptide substrates, and as a glycopeptide transferase that requires the prior addition of a GalNAc on a peptide before adding additional GalNAc moieties. Prefers both EA2 and the diglycosylated Muc5AC-3/13 as substrates, albeit at very low levels fro Muc5AC-3/13. This is Polypeptide N-acetylgalactosaminyltransferase 8 from Drosophila melanogaster (Fruit fly).